The primary structure comprises 199 residues: Recombination protein RecR (199 aa).

A C4-type zinc finger spans residues 60–75 (CARCHTFTEGEVCSTC). The 96-residue stretch at 83 to 178 (SRLAVVETPA…HVTRLARGVP (96 aa)) folds into the Toprim domain.

This sequence belongs to the RecR family.

Functionally, may play a role in DNA repair. It seems to be involved in an RecBC-independent recombinational process of DNA repair. It may act with RecF and RecO. In Paracidovorax citrulli (strain AAC00-1) (Acidovorax citrulli), this protein is Recombination protein RecR.